The following is an 875-amino-acid chain: Neurotrypsin (875 aa).

Positions 1–20 are cleaved as a signal peptide; that stretch reads MTLARFVLALVLGALPEVVG. Asparagine 26 carries N-linked (GlcNAc...) asparagine glycosylation. Residues 30 to 87 are disordered; the sequence is HHRHRHSPPPGPQYPYYLPTHQRPPRTRPPPPLPRFPRPPRALPAQRPHALQAGHTPR. Pro residues predominate over residues 56 to 71; sequence TRPPPPLPRFPRPPRA. Residues 93–165 form the Kringle domain; it reads CPAGELWVSV…GKVDWGYCDC (73 aa). 20 disulfides stabilise this stretch: cysteine 93/cysteine 165, cysteine 109/cysteine 149, cysteine 138/cysteine 163, cysteine 195/cysteine 259, cysteine 208/cysteine 269, cysteine 239/cysteine 249, cysteine 305/cysteine 369, cysteine 318/cysteine 379, cysteine 349/cysteine 359, cysteine 412/cysteine 475, cysteine 425/cysteine 485, cysteine 455/cysteine 465, cysteine 525/cysteine 589, cysteine 538/cysteine 599, cysteine 569/cysteine 579, cysteine 619/cysteine 750, cysteine 661/cysteine 677, cysteine 765/cysteine 831, cysteine 794/cysteine 808, and cysteine 821/cysteine 850. SRCR domains follow at residues 170-271, 280-381, 387-487, and 500-601; these read VRLR…TCSF, IRLV…SCTP, IRLA…ACYP, and VRLM…ICDY. The zymogen activation region stretch occupies residues 619-630; sequence CGLRLLHRRQKR. Residues 631–874 form the Peptidase S1 domain; that stretch reads IIGGKNSLRG…FVPWIKSVTK (244 aa). The active-site Charge relay system is the histidine 676. An N-linked (GlcNAc...) asparagine glycan is attached at asparagine 683. The active-site Charge relay system is aspartate 726. The active-site Charge relay system is serine 825.

The protein belongs to the peptidase S1 family.

It is found in the secreted. Functionally, plays a role in neuronal plasticity and the proteolytic action may subserve structural reorganizations associated with learning and memory operations. This is Neurotrypsin (PRSS12) from Macaca mulatta (Rhesus macaque).